Consider the following 901-residue polypeptide: Nuclear factor of activated T-cells, cytoplasmic 4 (901 aa).

Positions 1–11 (MGAASCEDEEL) are enriched in acidic residues. Disordered regions lie at residues 1 to 180 (MGAA…SSWS) and 203 to 361 (NEAA…TEDS). Positions 61–81 (IPRPPPPRPGMHSPPPRPAPS) are enriched in pro residues. Residues 96–109 (GGPGGTAGGTGGGR) are compositionally biased toward gly residues. Residues 114-119 (PSIRIT) form a calcineurin-binding region. Residues 114 to 123 (PSIRITSISP) are compositionally biased toward low complexity. Gly residues predominate over residues 151–165 (GFGGYREAGGQGGGA). A compositionally biased stretch (low complexity) spans 166–180 (FFSPSPGSSSLSSWS). A phosphoserine mark is found at S168, S170, S213, and S217. Residues 213–229 (SPLPSPRASPRPWTPED) form an SP 1 repeat. The segment at 213 to 293 (SPLPSPRASP…LSRRGSLGEE (81 aa)) is 2 approximate SP repeats. 2 stretches are compositionally biased toward pro residues: residues 215–227 (LPSP…PWTP) and 254–263 (GPIPASPRPA). The short motif at 268 to 270 (KRR) is the Nuclear localization signal element. Residues 272–288 (SSSGTPSSASPALSRRG) show a composition bias toward low complexity. The stretch at 277-293 (PSSASPALSRRGSLGEE) is one SP 2; approximate repeat. Residues S289, S334, and S344 each carry the phosphoserine modification. One can recognise an RHD domain in the interval 401-582 (SALPPLDWPL…VPIECSQRSA (182 aa)). A DNA-binding region spans residues 430 to 437 (RAHYETEG). The region spanning 586-683 (PQVEAYSPSA…KRSPTQSFKF (98 aa)) is the IPT/TIG domain. The short motif at 672–674 (RRK) is the Nuclear localization signal element. A Glycyl lysine isopeptide (Lys-Gly) (interchain with G-Cter in SUMO2) cross-link involves residue K689. Disordered stretches follow at residues 697–721 (SLRG…PRPP) and 791–868 (QYGG…GFRD). A compositionally biased stretch (pro residues) spans 805-822 (FSPPAPFRPPLPSSPPLE).

As to quaternary structure, member of the multicomponent NFATC transcription complex that consists of at least two components, a pre-existing cytoplasmic component NFATC2 and an inducible nuclear component NFATC1. Other NFAT proteins, such as NFATC4, NFATC3, or members of the activating protein-1 (AP-1) family and MAF can also bind the complex. NFAT proteins can bind DNA as monomers or dimers. Component of a promoter-binding complex composed of STAT3, NFATC3 and NFATC4; complex formation is enhanced by calcineurin. Interacts with CREBBP; this interaction potentiates transcription activation. Interacts with MAPK8/JNK1 and MAPK9/JNK2. Interacts with GATA4 (via the second Zn finger). Interacts (via N-terminus) with IRAK1 (via C-terminus). Interacts with RPS6KA3. Interacts with HOMER1, HOMER2 and HOMER3; this interaction competes with calcineurin/PPP3CA-binding and hence prevents NFATC4 dephosphorylation and activation. Interacts with ESR1 and ESR2; this interaction decreases NFATC4 transcriptional activity. Interacts with MTOR and MAPK7/ERK5. Interacts with TRIM17; this interaction prevents NFATC3 nuclear localization. Interacts with TCF25 (via C-terminus); the interaction leads to suppression of NFATC4 transcription factor activity and is reduced following stimulation with angiotensin-2. In terms of processing, phosphorylated by NFATC-kinases; dephosphorylated by calcineurin/PPP3CA. Phosphorylated on Ser-168 and Ser-170 by MTOR, IRAK1, MAPK7/ERK5 and MAPK14/p38, on Ser-213 and Ser-217 by MAPK8 and MAPK9, and on Ser-289 and Ser-344 by RPS6KA3. Phosphorylated by GSK3B; this phosphorylation markedly increases NFATC4 ubiquitination. Phosphorylation by MAPK8/JNK1, MAPK9/JNK2 and RPS6KA3 may stimulate NFATC4 transcriptional activity. Phosphorylation at Ser-168 and Ser-170 is stimulated by UV irradiation. Ubiquitinated, leading to degradation by the proteasome. Ubiquitination may be stimulated by GSK3B-dependent phosphorylation. Polyubiquitin linkage mainly occurs through 'Lys-48'. In terms of tissue distribution, expressed in heart (at protein level).

It localises to the cytoplasm. Its subcellular location is the nucleus. In terms of biological role, ca(2+)-regulated transcription factor that is involved in several processes, including the development and function of the immune, cardiovascular, musculoskeletal, and nervous systems. Involved in T-cell activation, stimulating the transcription of cytokine genes, including that of IL2 and IL4. Along with NFATC3, involved in embryonic heart development. Following JAK/STAT signaling activation and as part of a complex with NFATC3 and STAT3, binds to the alpha-beta E4 promoter region of CRYAB and activates transcription in cardiomyocytes. Involved in mitochondrial energy metabolism required for cardiac morphogenesis and function. Transactivates many genes involved in heart physiology. Along with GATA4, binds to and activates NPPB/BNP promoter. Activates NPPA/ANP/ANF and MYH7/beta-MHC transcription. Binds to and transactivates AGTR2 gene promoter. Involved in the regulation of adult hippocampal neurogenesis. Involved in BDNF-driven pro-survival signaling in hippocampal adult-born neurons. Involved in the formation of long-term spatial memory and long-term potentiation. In cochlear nucleus neurons, may play a role in deafferentation-induced apoptosis during a developmental critical period when auditory neurons depend on afferent input for survival. Binds to and activates the BACE1/Beta-secretase 1 promoter, hence may regulate the proteolytic processing of the amyloid precursor protein (APP). Plays a role in adipocyte differentiation. May be involved in myoblast differentiation into myotubes. Binds the consensus DNA sequence 5'-GGAAAAT-3'. In the presence of CREBBP, activates TNF transcription. Binds to PPARG gene promoter and regulates its activity. Binds to PPARG and REG3G gene promoters. In Rattus norvegicus (Rat), this protein is Nuclear factor of activated T-cells, cytoplasmic 4 (Nfatc4).